A 181-amino-acid chain; its full sequence is Probable toxin TacT (181 aa).

Belongs to the acetyltransferase family. As to quaternary structure, forms a complex with cognate antitoxin TacA.

In terms of biological role, probable toxin component of a type II toxin-antitoxin (TA) system. Might acetylate tRNA and inhibit translation. Should be neutralized by cognate antitoxin TacA (y4aR). This chain is Probable toxin TacT, found in Sinorhizobium fredii (strain NBRC 101917 / NGR234).